Here is a 164-residue protein sequence, read N- to C-terminus: UPF0178 protein RPD_2254 (164 aa).

It belongs to the UPF0178 family.

This Rhodopseudomonas palustris (strain BisB5) protein is UPF0178 protein RPD_2254.